Consider the following 265-residue polypeptide: Ribosomal RNA large subunit methyltransferase E (265 aa).

Glycine 83, tryptophan 85, aspartate 106, aspartate 122, and aspartate 146 together coordinate S-adenosyl-L-methionine. The active-site Proton acceptor is the lysine 186. The segment at 230-265 is disordered; it reads KGREAGPPSGGSERPVDVSKDLSARSDSEGPGDAEG. The span at 243–257 shows a compositional bias: basic and acidic residues; it reads RPVDVSKDLSARSDS.

This sequence belongs to the class I-like SAM-binding methyltransferase superfamily. RNA methyltransferase RlmE family.

Its subcellular location is the cytoplasm. It catalyses the reaction uridine(2552) in 23S rRNA + S-adenosyl-L-methionine = 2'-O-methyluridine(2552) in 23S rRNA + S-adenosyl-L-homocysteine + H(+). In terms of biological role, specifically methylates the uridine in position 2552 of 23S rRNA at the 2'-O position of the ribose in the fully assembled 50S ribosomal subunit. The sequence is that of Ribosomal RNA large subunit methyltransferase E from Mesorhizobium japonicum (strain LMG 29417 / CECT 9101 / MAFF 303099) (Mesorhizobium loti (strain MAFF 303099)).